We begin with the raw amino-acid sequence, 262 residues long: DNA-directed RNA polymerase subunit Rpo3 (262 aa).

The protein belongs to the archaeal Rpo3/eukaryotic RPB3 RNA polymerase subunit family. As to quaternary structure, part of the RNA polymerase complex.

It localises to the cytoplasm. It carries out the reaction RNA(n) + a ribonucleoside 5'-triphosphate = RNA(n+1) + diphosphate. Functionally, DNA-dependent RNA polymerase (RNAP) catalyzes the transcription of DNA into RNA using the four ribonucleoside triphosphates as substrates. The protein is DNA-directed RNA polymerase subunit Rpo3 of Pyrobaculum islandicum (strain DSM 4184 / JCM 9189 / GEO3).